A 160-amino-acid polypeptide reads, in one-letter code: Large ribosomal subunit protein bL17 (160 aa).

Residues 123–141 show a composition bias toward basic and acidic residues; it reads DEKRQKRAEARAKRREEMQ. Residues 123–160 are disordered; it reads DEKRQKRAEARAKRREEMQKAMAEQQQAEGGEPEGGNE. The segment covering 142–152 has biased composition (low complexity); that stretch reads KAMAEQQQAEG.

This sequence belongs to the bacterial ribosomal protein bL17 family. Part of the 50S ribosomal subunit. Contacts protein L32.

The chain is Large ribosomal subunit protein bL17 from Acidobacterium capsulatum (strain ATCC 51196 / DSM 11244 / BCRC 80197 / JCM 7670 / NBRC 15755 / NCIMB 13165 / 161).